The primary structure comprises 201 residues: dTTP/UTP pyrophosphatase (201 aa).

Aspartate 79 functions as the Proton acceptor in the catalytic mechanism.

This sequence belongs to the Maf family. YhdE subfamily. Requires a divalent metal cation as cofactor.

Its subcellular location is the cytoplasm. The catalysed reaction is dTTP + H2O = dTMP + diphosphate + H(+). The enzyme catalyses UTP + H2O = UMP + diphosphate + H(+). Nucleoside triphosphate pyrophosphatase that hydrolyzes dTTP and UTP. May have a dual role in cell division arrest and in preventing the incorporation of modified nucleotides into cellular nucleic acids. In Hahella chejuensis (strain KCTC 2396), this protein is dTTP/UTP pyrophosphatase.